The following is a 224-amino-acid chain: Cytidylate kinase (224 aa).

11–19 (GPAGAGKST) is an ATP binding site.

It belongs to the cytidylate kinase family. Type 1 subfamily.

The protein localises to the cytoplasm. The catalysed reaction is CMP + ATP = CDP + ADP. It catalyses the reaction dCMP + ATP = dCDP + ADP. In Exiguobacterium sp. (strain ATCC BAA-1283 / AT1b), this protein is Cytidylate kinase.